A 238-amino-acid polypeptide reads, in one-letter code: Uridylate kinase (238 aa).

10-13 (KFSG) lines the ATP pocket. Residues 18 to 23 (GGNGFG) are involved in allosteric activation by GTP. Glycine 52 provides a ligand contact to UMP. The ATP site is built by glycine 53 and arginine 57. Residues aspartate 73 and 134–141 (TGNPFFTT) each bind UMP. The ATP site is built by threonine 161, tyrosine 167, and aspartate 170.

Belongs to the UMP kinase family. Homohexamer.

The protein localises to the cytoplasm. It catalyses the reaction UMP + ATP = UDP + ADP. It functions in the pathway pyrimidine metabolism; CTP biosynthesis via de novo pathway; UDP from UMP (UMPK route): step 1/1. With respect to regulation, allosterically activated by GTP. Inhibited by UTP. Its function is as follows. Catalyzes the reversible phosphorylation of UMP to UDP. The chain is Uridylate kinase from Campylobacter fetus subsp. fetus (strain 82-40).